A 605-amino-acid polypeptide reads, in one-letter code: Elongation factor 4 (605 aa).

Residues 8 to 190 (RRVRNFCIVA…AIITRIPPPQ (183 aa)) enclose the tr-type G domain. GTP contacts are provided by residues 20 to 25 (DHGKST) and 137 to 140 (NKID).

Belongs to the TRAFAC class translation factor GTPase superfamily. Classic translation factor GTPase family. LepA subfamily.

The protein resides in the cell inner membrane. The catalysed reaction is GTP + H2O = GDP + phosphate + H(+). Required for accurate and efficient protein synthesis under certain stress conditions. May act as a fidelity factor of the translation reaction, by catalyzing a one-codon backward translocation of tRNAs on improperly translocated ribosomes. Back-translocation proceeds from a post-translocation (POST) complex to a pre-translocation (PRE) complex, thus giving elongation factor G a second chance to translocate the tRNAs correctly. Binds to ribosomes in a GTP-dependent manner. This chain is Elongation factor 4, found in Treponema pallidum (strain Nichols).